A 337-amino-acid polypeptide reads, in one-letter code: Ral GTPase-activating protein subunit alpha-1 (337 aa).

Component of the heterodimeric RalGAP1 complex with RALGAPB. Heterodimerization is required for activity. Interacts with the HLH region of TCF3/isoform E12.

Its subcellular location is the cytoplasm. The protein resides in the nucleus. Catalytic subunit of the heterodimeric RalGAP1 complex which acts as a GTPase activator for the Ras-like small GTPases RALA and RALB. The protein is Ral GTPase-activating protein subunit alpha-1 of Sus scrofa (Pig).